Reading from the N-terminus, the 433-residue chain is MSETAEKAIEIWKIRRLVKQLINCHGNGTSMITLIIPPGEQISRYSNMLAEEYGTASNIKSRVNRLSVLSAITSTRERLKLYNKVPDNGLVIYCGEVIMEGNKTRKLNIDFEPFKPINTSQYLCDNKFHTEALAELLESDQRFGFIVMDGHQTLYGVVSGSAREVLQRFTVDLPKKHGRGGQSALRFARLRDEKRHNYVRKVAEGAVQHFITDDKPNVAGIVLAGSADFKTELGQSDLFDQRLQSRIIKTVDVSYGGDAGFNQAIELAADTLSNVKYVQEKKLIQRFFDEISLDSGKYCFGVVDTMNALQEGAVETLLCFADLDMIRYEFKNSEGNPVITYMTKEQEEKDSTNSFLLDKDTGAEMELVSSMLLSEWLAEHYKDYGANLEFVSDRSQEGMQFVKGFGGIGAVMRYQLDLSMLDPESDEFYSDSD.

Residue Gln182 is modified to N5-methylglutamine. Residue Ser425 is modified to Phosphoserine.

It belongs to the eukaryotic release factor 1 family. Component of the eRF1-eRF3-GTP ternary complex, composed of sup45/eRF1, sup35/eRF3 and GTP.

The protein localises to the cytoplasm. Component of the eRF1-eRF3-GTP ternary complex, a ternary complex that mediates translation termination in response to the termination codons. The eRF1-eRF3-GTP complex binds to a stop codon in the ribosomal A-site. Sup45/eRF1 is responsible for stop codon recognition and inducing hydrolysis of peptidyl-tRNA. Following GTP hydrolysis by sup35/eRF3, sup35/eRF3 dissociates, permitting sup45/eRF1 to accommodate fully in the A-site. This chain is Eukaryotic peptide chain release factor subunit 1 (sup45), found in Schizosaccharomyces pombe (strain 972 / ATCC 24843) (Fission yeast).